The chain runs to 217 residues: Ribosomal RNA large subunit methyltransferase E (217 aa).

The S-adenosyl-L-methionine site is built by Gly71, Trp73, Asp91, Asp107, and Asp132. Lys172 acts as the Proton acceptor in catalysis.

Belongs to the class I-like SAM-binding methyltransferase superfamily. RNA methyltransferase RlmE family.

The protein localises to the cytoplasm. The enzyme catalyses uridine(2552) in 23S rRNA + S-adenosyl-L-methionine = 2'-O-methyluridine(2552) in 23S rRNA + S-adenosyl-L-homocysteine + H(+). Functionally, specifically methylates the uridine in position 2552 of 23S rRNA at the 2'-O position of the ribose in the fully assembled 50S ribosomal subunit. This chain is Ribosomal RNA large subunit methyltransferase E, found in Psychromonas ingrahamii (strain DSM 17664 / CCUG 51855 / 37).